The chain runs to 141 residues: Lysozyme P (141 aa).

An N-terminal signal peptide occupies residues 1 to 18 (MKAFLVICALTLTAVATQ). The C-type lysozyme domain occupies 20–141 (RTMDRCSLAR…GSLPSINSCF (122 aa)). 4 disulfide bridges follow: cysteine 25–cysteine 140, cysteine 46–cysteine 130, cysteine 81–cysteine 97, and cysteine 93–cysteine 111. Active-site residues include glutamate 51 and aspartate 69.

Belongs to the glycosyl hydrolase 22 family. In terms of tissue distribution, salivary gland.

It carries out the reaction Hydrolysis of (1-&gt;4)-beta-linkages between N-acetylmuramic acid and N-acetyl-D-glucosamine residues in a peptidoglycan and between N-acetyl-D-glucosamine residues in chitodextrins.. Its function is as follows. Unlikely to play an active role in the humoral immune defense. May have a function in the digestion of bacteria in the food. In Drosophila melanogaster (Fruit fly), this protein is Lysozyme P (LysP).